Reading from the N-terminus, the 176-residue chain is 2-C-methyl-D-erythritol 2,4-cyclodiphosphate synthase (176 aa).

A divalent metal cation is bound by residues Asp23, His25, and His60. 23–25 serves as a coordination point for 4-CDP-2-C-methyl-D-erythritol 2-phosphate; it reads DSH. Position 149-152 (149-152) interacts with 4-CDP-2-C-methyl-D-erythritol 2-phosphate; that stretch reads TSGE.

The protein belongs to the IspF family. In terms of assembly, homotrimer. It depends on a divalent metal cation as a cofactor.

The catalysed reaction is 4-CDP-2-C-methyl-D-erythritol 2-phosphate = 2-C-methyl-D-erythritol 2,4-cyclic diphosphate + CMP. The protein operates within isoprenoid biosynthesis; isopentenyl diphosphate biosynthesis via DXP pathway; isopentenyl diphosphate from 1-deoxy-D-xylulose 5-phosphate: step 4/6. Its function is as follows. Involved in the biosynthesis of isopentenyl diphosphate (IPP) and dimethylallyl diphosphate (DMAPP), two major building blocks of isoprenoid compounds. Catalyzes the conversion of 4-diphosphocytidyl-2-C-methyl-D-erythritol 2-phosphate (CDP-ME2P) to 2-C-methyl-D-erythritol 2,4-cyclodiphosphate (ME-CPP) with a corresponding release of cytidine 5-monophosphate (CMP). The protein is 2-C-methyl-D-erythritol 2,4-cyclodiphosphate synthase of Chlamydia abortus (strain DSM 27085 / S26/3) (Chlamydophila abortus).